Reading from the N-terminus, the 72-residue chain is Translation initiation factor IF-1 (72 aa).

One can recognise an S1-like domain in the interval 1-72 (MSKEEVLEFS…TKGRIIYRYK (72 aa)).

It belongs to the IF-1 family. Component of the 30S ribosomal translation pre-initiation complex which assembles on the 30S ribosome in the order IF-2 and IF-3, IF-1 and N-formylmethionyl-tRNA(fMet); mRNA recruitment can occur at any time during PIC assembly.

The protein localises to the cytoplasm. Its function is as follows. One of the essential components for the initiation of protein synthesis. Stabilizes the binding of IF-2 and IF-3 on the 30S subunit to which N-formylmethionyl-tRNA(fMet) subsequently binds. Helps modulate mRNA selection, yielding the 30S pre-initiation complex (PIC). Upon addition of the 50S ribosomal subunit IF-1, IF-2 and IF-3 are released leaving the mature 70S translation initiation complex. This is Translation initiation factor IF-1 from Bartonella henselae (strain ATCC 49882 / DSM 28221 / CCUG 30454 / Houston 1) (Rochalimaea henselae).